The chain runs to 143 residues: Transcriptional regulator MraZ (143 aa).

2 SpoVT-AbrB domains span residues 5 to 47 and 76 to 119; these read EYEH…PRSV and AADM…APRR.

This sequence belongs to the MraZ family. Forms oligomers.

The protein resides in the cytoplasm. The protein localises to the nucleoid. This Roseiflexus sp. (strain RS-1) protein is Transcriptional regulator MraZ.